The sequence spans 971 residues: uncharacterized protein (971 aa).

Positions Met1–Ala24 are cleaved as a signal peptide. Positions Arg127–Arg146 are disordered. The next 6 helical transmembrane spans lie at Ile611–Ala631, Leu721–Ile741, Ala753–Phe773, Val795–Val815, Phe832–Phe852, and Gly865–Val885. Residues Thr933–Asn944 show a composition bias toward basic residues. The disordered stretch occupies residues Thr933–Lys971. The segment covering Arg945–Ser954 has biased composition (basic and acidic residues).

It belongs to the TrbL/VirB6 family.

Its subcellular location is the cell membrane. This is an uncharacterized protein from Rickettsia typhi (strain ATCC VR-144 / Wilmington).